The chain runs to 595 residues: Beta-(1--&gt;2)glucan export ATP-binding/permease protein NdvA (595 aa).

The 281-residue stretch at 21 to 301 (SLLICAANVM…MSNFINLTVS (281 aa)) folds into the ABC transmembrane type-1 domain. Transmembrane regions (helical) follow at residues 22-42 (LLIC…PILF), 55-75 (IILT…AYVL), 128-148 (AIWL…FILI), 152-172 (FNMN…YVLI), and 248-268 (TAST…VAKG). The ABC transporter domain maps to 335-569 (VQFHHVTYKF…GGRFYKLLKA (235 aa)). Residue 368 to 375 (GPTGAGKT) participates in ATP binding.

This sequence belongs to the ABC transporter superfamily. Beta-(1--&gt;2)glucan exporter (TC 3.A.1.108.1) family. In terms of assembly, homodimer.

Its subcellular location is the cell inner membrane. It carries out the reaction [(1-&gt;2)-beta-D-glucosyl](n)(in) + ATP + H2O = [(1-&gt;2)-beta-D-glucosyl](n)(out) + ADP + phosphate + H(+). Involved in beta-(1--&gt;2)glucan export. Transmembrane domains (TMD) form a pore in the inner membrane and the ATP-binding domain (NBD) is responsible for energy generation. The polypeptide is Beta-(1--&gt;2)glucan export ATP-binding/permease protein NdvA (Bartonella quintana (strain Toulouse) (Rochalimaea quintana)).